The sequence spans 646 residues: ATP-dependent zinc metalloprotease FtsH (646 aa).

The interval 1-27 (MTNNQTDRPRPPGPESRRFDNNDKNNR) is disordered. Residues 1 to 35 (MTNNQTDRPRPPGPESRRFDNNDKNNRNRWGPIPS) are Cytoplasmic-facing. Basic and acidic residues predominate over residues 7-26 (DRPRPPGPESRRFDNNDKNN). Residues 36 to 56 (WAWIVLIVALLLNWLVAPILF) traverse the membrane as a helical segment. The Extracellular segment spans residues 57-144 (PEGKGAVSIP…QPESSTRSLL (88 aa)). A helical transmembrane segment spans residues 145–165 (LSILISFGPTILFFLLFLWLI). The Cytoplasmic portion of the chain corresponds to 166-646 (SKAQSSQQGL…GLGEKQPEPA (481 aa)). Residue 237-244 (GPPGTGKT) coordinates ATP. Histidine 459 provides a ligand contact to Zn(2+). Glutamate 460 is an active-site residue. Residues histidine 463 and aspartate 535 each contribute to the Zn(2+) site.

This sequence in the central section; belongs to the AAA ATPase family. In the C-terminal section; belongs to the peptidase M41 family. Homohexamer. Zn(2+) serves as cofactor.

It localises to the cell membrane. Acts as a processive, ATP-dependent zinc metallopeptidase for both cytoplasmic and membrane proteins. Plays a role in the quality control of integral membrane proteins. The sequence is that of ATP-dependent zinc metalloprotease FtsH from Thermobaculum terrenum (strain ATCC BAA-798 / CCMEE 7001 / YNP1).